A 108-amino-acid polypeptide reads, in one-letter code: Thiosulfate sulfurtransferase GlpE (108 aa).

In terms of domain architecture, Rhodanese spans Gln-17–Ala-105. Residue Cys-65 is the Cysteine persulfide intermediate of the active site.

It belongs to the GlpE family.

The protein resides in the cytoplasm. It catalyses the reaction thiosulfate + hydrogen cyanide = thiocyanate + sulfite + 2 H(+). The catalysed reaction is thiosulfate + [thioredoxin]-dithiol = [thioredoxin]-disulfide + hydrogen sulfide + sulfite + 2 H(+). Transferase that catalyzes the transfer of sulfur from thiosulfate to thiophilic acceptors such as cyanide or dithiols. May function in a CysM-independent thiosulfate assimilation pathway by catalyzing the conversion of thiosulfate to sulfite, which can then be used for L-cysteine biosynthesis. This chain is Thiosulfate sulfurtransferase GlpE, found in Escherichia coli O127:H6 (strain E2348/69 / EPEC).